The primary structure comprises 402 residues: 4-hydroxy-3-methylbut-2-enyl diphosphate reductase (402 aa).

C66 contacts [4Fe-4S] cluster. (2E)-4-hydroxy-3-methylbut-2-enyl diphosphate is bound at residue H96. A dimethylallyl diphosphate-binding site is contributed by H96. H96 is an isopentenyl diphosphate binding site. C157 lines the [4Fe-4S] cluster pocket. Residue H185 participates in (2E)-4-hydroxy-3-methylbut-2-enyl diphosphate binding. H185 serves as a coordination point for dimethylallyl diphosphate. H185 lines the isopentenyl diphosphate pocket. E187 serves as the catalytic Proton donor. (2E)-4-hydroxy-3-methylbut-2-enyl diphosphate is bound at residue T250. Residue C288 coordinates [4Fe-4S] cluster. Residues S317, S318, N319, and S379 each contribute to the (2E)-4-hydroxy-3-methylbut-2-enyl diphosphate site. Positions 317, 318, 319, and 379 each coordinate dimethylallyl diphosphate. Isopentenyl diphosphate contacts are provided by S317, S318, N319, and S379.

Belongs to the IspH family. It depends on [4Fe-4S] cluster as a cofactor.

The enzyme catalyses isopentenyl diphosphate + 2 oxidized [2Fe-2S]-[ferredoxin] + H2O = (2E)-4-hydroxy-3-methylbut-2-enyl diphosphate + 2 reduced [2Fe-2S]-[ferredoxin] + 2 H(+). The catalysed reaction is dimethylallyl diphosphate + 2 oxidized [2Fe-2S]-[ferredoxin] + H2O = (2E)-4-hydroxy-3-methylbut-2-enyl diphosphate + 2 reduced [2Fe-2S]-[ferredoxin] + 2 H(+). Its pathway is isoprenoid biosynthesis; dimethylallyl diphosphate biosynthesis; dimethylallyl diphosphate from (2E)-4-hydroxy-3-methylbutenyl diphosphate: step 1/1. It participates in isoprenoid biosynthesis; isopentenyl diphosphate biosynthesis via DXP pathway; isopentenyl diphosphate from 1-deoxy-D-xylulose 5-phosphate: step 6/6. In terms of biological role, catalyzes the conversion of 1-hydroxy-2-methyl-2-(E)-butenyl 4-diphosphate (HMBPP) into a mixture of isopentenyl diphosphate (IPP) and dimethylallyl diphosphate (DMAPP). Acts in the terminal step of the DOXP/MEP pathway for isoprenoid precursor biosynthesis. This Microcystis aeruginosa (strain NIES-843 / IAM M-2473) protein is 4-hydroxy-3-methylbut-2-enyl diphosphate reductase.